Here is a 393-residue protein sequence, read N- to C-terminus: NAD(P)H-quinone oxidoreductase subunit H, chloroplastic (393 aa).

Belongs to the complex I 49 kDa subunit family. NDH is composed of at least 16 different subunits, 5 of which are encoded in the nucleus.

The protein localises to the plastid. It localises to the chloroplast thylakoid membrane. The catalysed reaction is a plastoquinone + NADH + (n+1) H(+)(in) = a plastoquinol + NAD(+) + n H(+)(out). The enzyme catalyses a plastoquinone + NADPH + (n+1) H(+)(in) = a plastoquinol + NADP(+) + n H(+)(out). Its function is as follows. NDH shuttles electrons from NAD(P)H:plastoquinone, via FMN and iron-sulfur (Fe-S) centers, to quinones in the photosynthetic chain and possibly in a chloroplast respiratory chain. The immediate electron acceptor for the enzyme in this species is believed to be plastoquinone. Couples the redox reaction to proton translocation, and thus conserves the redox energy in a proton gradient. In Gossypium barbadense (Sea Island cotton), this protein is NAD(P)H-quinone oxidoreductase subunit H, chloroplastic.